A 123-amino-acid polypeptide reads, in one-letter code: MPTISQLVKKGREKVEKKTKSPALQSCPQKRGVCVRVYTTTPKKPNSALRKVAKVRLTNGVEVIAYIPGEGHNLQEHSIVLVRGGRVKDLPGVRYHIVRGTLDCAGVNNRRQSRSKYGTKRPK.

A disordered region spans residues 1–23 (MPTISQLVKKGREKVEKKTKSPA). Position 89 is a 3-methylthioaspartic acid (D89).

It belongs to the universal ribosomal protein uS12 family. In terms of assembly, part of the 30S ribosomal subunit. Contacts proteins S8 and S17. May interact with IF1 in the 30S initiation complex.

With S4 and S5 plays an important role in translational accuracy. Functionally, interacts with and stabilizes bases of the 16S rRNA that are involved in tRNA selection in the A site and with the mRNA backbone. Located at the interface of the 30S and 50S subunits, it traverses the body of the 30S subunit contacting proteins on the other side and probably holding the rRNA structure together. The combined cluster of proteins S8, S12 and S17 appears to hold together the shoulder and platform of the 30S subunit. The protein is Small ribosomal subunit protein uS12 of Thermodesulfovibrio yellowstonii (strain ATCC 51303 / DSM 11347 / YP87).